The chain runs to 397 residues: Phosphonopyruvate decarboxylase (397 aa).

This sequence belongs to the TPP enzyme family. It depends on thiamine diphosphate as a cofactor. Requires Mg(2+) as cofactor.

The enzyme catalyses 3-phosphonopyruvate + H(+) = phosphonoacetaldehyde + CO2. Its pathway is secondary metabolite biosynthesis; bialaphos biosynthesis. Its function is as follows. Involved in the biosynthesis of phosphinothricin tripeptide (PTT), also known as bialaphos (BA), a natural-product antibiotic and potent herbicide. Catalyzes the decarboxylation of phosphonopyruvate (PnPy) to generate phosphonoacetaldehyde (PnAA). The polypeptide is Phosphonopyruvate decarboxylase (Streptomyces viridochromogenes (strain DSM 40736 / JCM 4977 / BCRC 1201 / Tue 494)).